A 124-amino-acid chain; its full sequence is Tax1-binding protein 3 (124 aa).

The residue at position 2 (Ser2) is an N-acetylserine. Positions 15-112 (RVEIHKLRQG…EVVRLLVTRQ (98 aa)) constitute a PDZ domain. Ser61 is modified (phosphoserine).

In terms of assembly, interacts (via its PDZ domain) with GLS2. Interacts (via its PDZ domain) with RTKN (via the C-terminal region); this interaction facilitates Rho-mediated activation of the FOS serum response element (SRE). Interacts (via PDZ domain) with ARHGEF16. Interacts (via PDZ domain) with KCNJ4 (via C-terminus). Competes with LIN7A for KCNJ4 binding. Interacts (via its PDZ domain) with CTNNB1; this interaction inhibits the transcriptional activity of CTNNB1. Interacts with ADGRB2.

Its subcellular location is the cytoplasm. It is found in the nucleus. The protein localises to the cell membrane. Functionally, may regulate a number of protein-protein interactions by competing for PDZ domain binding sites. Binds CTNNB1 and may thereby act as an inhibitor of the Wnt signaling pathway. Competes with LIN7A for KCNJ4 binding, and thereby promotes KCNJ4 internalization. May play a role in the Rho signaling pathway. The protein is Tax1-binding protein 3 of Mus musculus (Mouse).